A 143-amino-acid polypeptide reads, in one-letter code: Large ribosomal subunit protein uL15 (143 aa).

The tract at residues 1–52 (MKLNTLAPAAGSKSAPKRLGRGIGSGLGKTSGKGHKGQKARSGGYHKVGFEG) is disordered. The segment covering 21–31 (RGIGSGLGKTS) has biased composition (gly residues).

This sequence belongs to the universal ribosomal protein uL15 family. In terms of assembly, part of the 50S ribosomal subunit.

In terms of biological role, binds to the 23S rRNA. The protein is Large ribosomal subunit protein uL15 of Francisella tularensis subsp. novicida (strain U112).